The chain runs to 311 residues: tRNA dimethylallyltransferase (311 aa).

10-17 (GPTASGKT) provides a ligand contact to ATP. 12–17 (TASGKT) is a binding site for substrate. Interaction with substrate tRNA stretches follow at residues 35-38 (DSAL), 159-163 (QRINR), and 240-245 (RCVGYR).

It belongs to the IPP transferase family. Monomer. The cofactor is Mg(2+).

The enzyme catalyses adenosine(37) in tRNA + dimethylallyl diphosphate = N(6)-dimethylallyladenosine(37) in tRNA + diphosphate. In terms of biological role, catalyzes the transfer of a dimethylallyl group onto the adenine at position 37 in tRNAs that read codons beginning with uridine, leading to the formation of N6-(dimethylallyl)adenosine (i(6)A). The sequence is that of tRNA dimethylallyltransferase from Haemophilus influenzae (strain PittEE).